Here is a 46-residue protein sequence, read N- to C-terminus: METSSLALQLAIIVLVVLLGLTGLGVYMAFGPAAKGLDDPWDEHDD.

A helical membrane pass occupies residues Leu-10–Phe-30.

The protein belongs to the PsbN family.

The protein resides in the cellular thylakoid membrane. Functionally, may play a role in photosystem I and II biogenesis. In Prochlorococcus marinus (strain MIT 9211), this protein is Protein PsbN.